The chain runs to 421 residues: MWRWSTGVRTMLGYAMCFLALGSALTVRLHSTRTNLPQYLTREIGDDEFEELLRSSASAGHKWHVEQFVDGSRCYVPETEQNMAPVPDDLLERGIKLVEEATVGKKLEYLPISYWGYKFINSELNKTVIQHKDQHQVLLGSMVKADPQTVQHSLERDEDSYYISERFGDGDLCSLLEEDRTVEVQYRCKYDTPLEIILDLKEYETCRYTMLVSIPSLCELPEFGPYTRQTPANTIYCTAPATPEFNIATLVEAYKPTFLGHGFYHLAPHANLTHKETTAMLMYHQQPIPGNEEDDGTMDSAFIKHSTMAYMQLLEMGLLNGPDGLPFSEEGNFTVYAKVIGFDGGLITVTRFQISHGEVIIDHVVPEVLEDMEQGNSEDYEQQAPEQLDEEEAELTSQSDDPAIMRVHLQEFITPEYDAIE.

A signal peptide spans 1–26 (MWRWSTGVRTMLGYAMCFLALGSALT). Residues 99–220 (EEATVGKKLE…LVSIPSLCEL (122 aa)) enclose the MRH domain. Residue Trp115 participates in a mannooligosaccharide derivative binding. N-linked (GlcNAc...) asparagine glycosylation is present at Asn125. Disulfide bonds link Cys173-Cys206 and Cys188-Cys218. Arg180, Glu202, and Tyr208 together coordinate a mannooligosaccharide derivative. N-linked (GlcNAc...) asparagine glycans are attached at residues Asn271 and Asn332. Residues 375–394 (GNSEDYEQQAPEQLDEEEAE) show a composition bias toward acidic residues. The segment at 375–403 (GNSEDYEQQAPEQLDEEEAELTSQSDDPA) is disordered.

Belongs to the OS-9 family. As to quaternary structure, interacts with missfolded ER lumenal proteins.

The protein localises to the endoplasmic reticulum membrane. Lectin involved in the quality control of the secretory pathway. As a member of the endoplasmic reticulum-associated degradation lumenal (ERAD-L) surveillance system, targets misfolded endoplasmic reticulum lumenal glycoproteins for degradation. This is Protein OS-9 homolog (YOS9) from Eremothecium gossypii (strain ATCC 10895 / CBS 109.51 / FGSC 9923 / NRRL Y-1056) (Yeast).